A 92-amino-acid chain; its full sequence is Small ribosomal subunit protein bS20 (92 aa).

The interval 1–25 is disordered; the sequence is MANSAQARKRARQAAKANSHNSALR.

The protein belongs to the bacterial ribosomal protein bS20 family.

Functionally, binds directly to 16S ribosomal RNA. This Paraburkholderia phymatum (strain DSM 17167 / CIP 108236 / LMG 21445 / STM815) (Burkholderia phymatum) protein is Small ribosomal subunit protein bS20.